The chain runs to 181 residues: Peptidyl-tRNA hydrolase (181 aa).

Residue Tyr-14 coordinates tRNA. Catalysis depends on His-19, which acts as the Proton acceptor. TRNA-binding residues include Phe-61, Asn-63, and Asn-107.

This sequence belongs to the PTH family. In terms of assembly, monomer.

The protein localises to the cytoplasm. The catalysed reaction is an N-acyl-L-alpha-aminoacyl-tRNA + H2O = an N-acyl-L-amino acid + a tRNA + H(+). Hydrolyzes ribosome-free peptidyl-tRNAs (with 1 or more amino acids incorporated), which drop off the ribosome during protein synthesis, or as a result of ribosome stalling. Its function is as follows. Catalyzes the release of premature peptidyl moieties from peptidyl-tRNA molecules trapped in stalled 50S ribosomal subunits, and thus maintains levels of free tRNAs and 50S ribosomes. The protein is Peptidyl-tRNA hydrolase of Campylobacter fetus subsp. fetus (strain 82-40).